Reading from the N-terminus, the 372-residue chain is uncharacterized protein (372 aa).

Positions 1 to 33 (MVRRALRLAAGTASLAAGTWLLRALHGTPAALG) are cleaved as a signal peptide.

This sequence to K.pneumoniae RomA.

This is an uncharacterized protein from Mycobacterium bovis (strain ATCC BAA-935 / AF2122/97).